We begin with the raw amino-acid sequence, 321 residues long: Beta-ketoacyl-[acyl-carrier-protein] synthase III (321 aa).

Residues cysteine 116 and histidine 248 contribute to the active site. The interval 249–253 is ACP-binding; that stretch reads QANLR. Asparagine 278 is a catalytic residue.

Belongs to the thiolase-like superfamily. FabH family. In terms of assembly, homodimer.

Its subcellular location is the cytoplasm. The catalysed reaction is malonyl-[ACP] + acetyl-CoA + H(+) = 3-oxobutanoyl-[ACP] + CO2 + CoA. Its pathway is lipid metabolism; fatty acid biosynthesis. Catalyzes the condensation reaction of fatty acid synthesis by the addition to an acyl acceptor of two carbons from malonyl-ACP. Catalyzes the first condensation reaction which initiates fatty acid synthesis and may therefore play a role in governing the total rate of fatty acid production. Possesses both acetoacetyl-ACP synthase and acetyl transacylase activities. Its substrate specificity determines the biosynthesis of branched-chain and/or straight-chain of fatty acids. This Yersinia enterocolitica serotype O:8 / biotype 1B (strain NCTC 13174 / 8081) protein is Beta-ketoacyl-[acyl-carrier-protein] synthase III.